The chain runs to 447 residues: Tubulin beta-1 chain (447 aa).

GTP-binding residues include Gln-11, Glu-69, Ser-138, Gly-142, Thr-143, Gly-144, Asn-204, and Asn-226. Glu-69 lines the Mg(2+) pocket.

Belongs to the tubulin family. As to quaternary structure, dimer of alpha and beta chains. A typical microtubule is a hollow water-filled tube with an outer diameter of 25 nm and an inner diameter of 15 nM. Alpha-beta heterodimers associate head-to-tail to form protofilaments running lengthwise along the microtubule wall with the beta-tubulin subunit facing the microtubule plus end conferring a structural polarity. Microtubules usually have 13 protofilaments but different protofilament numbers can be found in some organisms and specialized cells. Requires Mg(2+) as cofactor.

The protein resides in the cytoplasm. The protein localises to the cytoskeleton. Its function is as follows. Tubulin is the major constituent of microtubules, a cylinder consisting of laterally associated linear protofilaments composed of alpha- and beta-tubulin heterodimers. Microtubules grow by the addition of GTP-tubulin dimers to the microtubule end, where a stabilizing cap forms. Below the cap, tubulin dimers are in GDP-bound state, owing to GTPase activity of alpha-tubulin. The chain is Tubulin beta-1 chain (benA) from Emericella nidulans (strain FGSC A4 / ATCC 38163 / CBS 112.46 / NRRL 194 / M139) (Aspergillus nidulans).